The chain runs to 217 residues: uncharacterized protein (217 aa).

Positions 1–24 are cleaved as a signal peptide; sequence MRYTVLIALQGALLLLLLIDDGQG.

This is an uncharacterized protein from Aedes vexans (Inland floodwater mosquito).